The chain runs to 369 residues: Peptide chain release factor 2 (369 aa).

Glutamine 249 bears the N5-methylglutamine mark.

The protein belongs to the prokaryotic/mitochondrial release factor family. Methylated by PrmC. Methylation increases the termination efficiency of RF2.

Its subcellular location is the cytoplasm. Peptide chain release factor 2 directs the termination of translation in response to the peptide chain termination codons UGA and UAA. The polypeptide is Peptide chain release factor 2 (Corynebacterium diphtheriae (strain ATCC 700971 / NCTC 13129 / Biotype gravis)).